The following is a 339-amino-acid chain: UDP-N-acetylenolpyruvoylglucosamine reductase (339 aa).

Positions 16 to 188 (GIAATARYYS…LQVTLRLNKQ (173 aa)) constitute an FAD-binding PCMH-type domain. Arg-164 is an active-site residue. The active-site Proton donor is Ser-238. Glu-334 is an active-site residue.

The protein belongs to the MurB family. FAD is required as a cofactor.

It localises to the cytoplasm. It carries out the reaction UDP-N-acetyl-alpha-D-muramate + NADP(+) = UDP-N-acetyl-3-O-(1-carboxyvinyl)-alpha-D-glucosamine + NADPH + H(+). The protein operates within cell wall biogenesis; peptidoglycan biosynthesis. In terms of biological role, cell wall formation. In Amoebophilus asiaticus (strain 5a2), this protein is UDP-N-acetylenolpyruvoylglucosamine reductase.